We begin with the raw amino-acid sequence, 293 residues long: Ribosomal RNA small subunit methyltransferase A (293 aa).

6 residues coordinate S-adenosyl-L-methionine: Asn38, Val40, Gly65, Glu86, Asp116, and Asn135.

It belongs to the class I-like SAM-binding methyltransferase superfamily. rRNA adenine N(6)-methyltransferase family. RsmA subfamily.

It is found in the cytoplasm. It carries out the reaction adenosine(1518)/adenosine(1519) in 16S rRNA + 4 S-adenosyl-L-methionine = N(6)-dimethyladenosine(1518)/N(6)-dimethyladenosine(1519) in 16S rRNA + 4 S-adenosyl-L-homocysteine + 4 H(+). In terms of biological role, specifically dimethylates two adjacent adenosines (A1518 and A1519) in the loop of a conserved hairpin near the 3'-end of 16S rRNA in the 30S particle. May play a critical role in biogenesis of 30S subunits. The protein is Ribosomal RNA small subunit methyltransferase A of Nocardia farcinica (strain IFM 10152).